A 120-amino-acid chain; its full sequence is Holo-[acyl-carrier-protein] synthase (120 aa).

Residues aspartate 8 and glutamate 58 each contribute to the Mg(2+) site.

Belongs to the P-Pant transferase superfamily. AcpS family. Mg(2+) serves as cofactor.

The protein localises to the cytoplasm. The catalysed reaction is apo-[ACP] + CoA = holo-[ACP] + adenosine 3',5'-bisphosphate + H(+). Its function is as follows. Transfers the 4'-phosphopantetheine moiety from coenzyme A to a Ser of acyl-carrier-protein. The chain is Holo-[acyl-carrier-protein] synthase from Streptococcus pneumoniae (strain Hungary19A-6).